The primary structure comprises 546 residues: Cholesterol oxidase (546 aa).

A signal peptide (tat-type signal) is located at residues 1-42; that stretch reads MTAQQHLSRRRMLGMAAFGAAALAGGTTIAAPRAAAAAKSAA. Tyrosine 57, glycine 58, glutamate 77, glycine 152, asparagine 156, glycine 157, methionine 159, and valine 287 together coordinate FAD. Catalysis depends on proton acceptor residues glutamate 398 and histidine 484. Residues glycine 512 and phenylalanine 524 each contribute to the FAD site.

Belongs to the GMC oxidoreductase family. As to quaternary structure, monomer. FAD is required as a cofactor. Post-translationally, predicted to be exported by the Tat system. The position of the signal peptide cleavage has been experimentally proven.

It localises to the secreted. It catalyses the reaction cholesterol + O2 = cholest-5-en-3-one + H2O2. The catalysed reaction is cholest-5-en-3-one = cholest-4-en-3-one. It participates in steroid metabolism; cholesterol degradation. Bifunctional enzyme that catalyzes the oxidation and isomerization of cholesterol to cholestenone (cholest-4-en-3-one), an initial step in the cholesterol degradation process. The cholesterol degradation pathway allows the bacterium to utilize cholesterol as its sole source of carbon and energy. This is Cholesterol oxidase from Streptomyces sp. (strain SA-COO).